The chain runs to 747 residues: AT-rich interactive domain-containing protein 4 (747 aa).

Residues 454–475 are disordered; the sequence is PLPTRKRSEPCRESKEIENGGP. Over residues 459 to 471 the composition is skewed to basic and acidic residues; it reads KRSEPCRESKEIE. Residues 566 to 670 enclose the ARID domain; sequence VCSEEEFLRD…YLLEYEYAHD (105 aa). A PHD-type zinc finger spans residues 674–730; that stretch reads GECCLICRSSTAGDWVNCGSCGEWAHFGCDRRPGLGAFKDYAKTDGLEYVCPNCSVS.

The protein resides in the nucleus. This chain is AT-rich interactive domain-containing protein 4 (ARID4), found in Arabidopsis thaliana (Mouse-ear cress).